The sequence spans 386 residues: Lycopene beta-cyclase (386 aa).

An NAD(+)-binding site is contributed by 4–34 (DVLLAGAGLANGLIALALRAARPDLRVLLLD).

This sequence belongs to the lycopene cyclase family. Requires FAD as cofactor.

The enzyme catalyses a carotenoid psi-end group = a carotenoid beta-end derivative. It carries out the reaction all-trans-lycopene = gamma-carotene. It catalyses the reaction gamma-carotene = all-trans-beta-carotene. The protein operates within carotenoid biosynthesis; astaxanthin biosynthesis. Functionally, catalyzes the double cyclization reaction which converts lycopene to beta-carotene. The protein is Lycopene beta-cyclase of Paracoccus sp. (strain N81106 / MBIC 01143) (Agrobacterium aurantiacum).